The following is a 120-amino-acid chain: Large ribosomal subunit protein uL18 (120 aa).

The protein belongs to the universal ribosomal protein uL18 family. Part of the 50S ribosomal subunit; part of the 5S rRNA/L5/L18/L25 subcomplex. Contacts the 5S and 23S rRNAs.

Its function is as follows. This is one of the proteins that bind and probably mediate the attachment of the 5S RNA into the large ribosomal subunit, where it forms part of the central protuberance. This Geobacillus thermodenitrificans (strain NG80-2) protein is Large ribosomal subunit protein uL18.